Consider the following 183-residue polypeptide: Nucleosome assembly protein 1-like 5 (183 aa).

A disordered region spans residues 1-71 (MADSENQGPA…APKPKNDFIE (71 aa)). Composition is skewed to low complexity over residues 7 to 21 (QGPAEPSQAAAAAEA) and 28 to 49 (AEGGAQGGDCDSAAGDPDSAAG). The stretch at 81–107 (VLALKKLQKRCDKIEAKFDKEFQALEK) forms a coiled coil. Residues 135–161 (EGEEEEEEEYEDDEEEGEEEEEEEEAA) show a composition bias toward acidic residues. Residues 135–183 (EGEEEEEEEYEDDEEEGEEEEEEEEAAAEAAAGAKHDDAHAEMPDDAKK) form a disordered region. Residues 168 to 183 (AKHDDAHAEMPDDAKK) show a composition bias toward basic and acidic residues.

This sequence belongs to the nucleosome assembly protein (NAP) family.

The protein localises to the nucleus. The chain is Nucleosome assembly protein 1-like 5 (NAP1L5) from Pongo abelii (Sumatran orangutan).